We begin with the raw amino-acid sequence, 140 residues long: Large ribosomal subunit protein bL17 (140 aa).

This sequence belongs to the bacterial ribosomal protein bL17 family. In terms of assembly, part of the 50S ribosomal subunit. Contacts protein L32.

The chain is Large ribosomal subunit protein bL17 from Methylobacterium nodulans (strain LMG 21967 / CNCM I-2342 / ORS 2060).